Consider the following 367-residue polypeptide: Peptide chain release factor 2 (367 aa).

Position 254 is an N5-methylglutamine (glutamine 254).

It belongs to the prokaryotic/mitochondrial release factor family. Methylated by PrmC. Methylation increases the termination efficiency of RF2.

The protein resides in the cytoplasm. Functionally, peptide chain release factor 2 directs the termination of translation in response to the peptide chain termination codons UGA and UAA. This Variovorax paradoxus (strain S110) protein is Peptide chain release factor 2.